The chain runs to 420 residues: UDP-N-acetylglucosamine 1-carboxyvinyltransferase (420 aa).

A phosphoenolpyruvate-binding site is contributed by 22 to 23 (KN). Arg92 is a UDP-N-acetyl-alpha-D-glucosamine binding site. Cys116 serves as the catalytic Proton donor. 2-(S-cysteinyl)pyruvic acid O-phosphothioketal is present on Cys116. UDP-N-acetyl-alpha-D-glucosamine is bound by residues 121–125 (RPVDL), 161–164 (KVSV), Asp306, and Ile328.

The protein belongs to the EPSP synthase family. MurA subfamily.

The protein resides in the cytoplasm. The catalysed reaction is phosphoenolpyruvate + UDP-N-acetyl-alpha-D-glucosamine = UDP-N-acetyl-3-O-(1-carboxyvinyl)-alpha-D-glucosamine + phosphate. It participates in cell wall biogenesis; peptidoglycan biosynthesis. Its function is as follows. Cell wall formation. Adds enolpyruvyl to UDP-N-acetylglucosamine. The polypeptide is UDP-N-acetylglucosamine 1-carboxyvinyltransferase (Yersinia pseudotuberculosis serotype O:1b (strain IP 31758)).